Here is a 274-residue protein sequence, read N- to C-terminus: uncharacterized protein (274 aa).

The signal sequence occupies residues methionine 1–alanine 30.

This sequence to M.tuberculosis Rv1405c.

This is an uncharacterized protein from Mycobacterium tuberculosis (strain CDC 1551 / Oshkosh).